The chain runs to 722 residues: WD repeat-containing and planar cell polarity effector protein fritz homolog (722 aa).

2 WD repeats span residues 305-343 (LRSK…TLLA) and 344-383 (QAEL…INIQ). Residues 655–710 (IPNGPSSRWAIERRTEEEEEEEEEEEEELCTDSSGATTWNAEGELKEDQRKQDIGD) are disordered. Positions 671-684 (EEEEEEEEEEEELC) are enriched in acidic residues. Positions 685–694 (TDSSGATTWN) are enriched in polar residues. Over residues 697-708 (GELKEDQRKQDI) the composition is skewed to basic and acidic residues.

The protein belongs to the WD repeat fritz family. Component of the CPLANE (ciliogenesis and planar polarity effectors) complex, composed of INTU, FUZ and WDPCP. Interacts with CPLANE1.

It localises to the cell membrane. It is found in the cytoplasm. The protein localises to the cytoskeleton. The protein resides in the cilium axoneme. Its subcellular location is the cilium basal body. Functionally, probable effector of the planar cell polarity signaling pathway which regulates the septin cytoskeleton in both ciliogenesis and collective cell movements. Together with FUZ and WDPCP proposed to function as core component of the CPLANE (ciliogenesis and planar polarity effectors) complex involved in the recruitment of peripheral IFT-A proteins to basal bodies. Binds phosphatidylinositol 3-phosphate with highest affinity, followed by phosphatidylinositol 4-phosphate and phosphatidylinositol 5-phosphate. The polypeptide is WD repeat-containing and planar cell polarity effector protein fritz homolog (Wdpcp) (Mus musculus (Mouse)).